Reading from the N-terminus, the 360-residue chain is UDP-N-acetylglucosamine--N-acetylmuramyl-(pentapeptide) pyrophosphoryl-undecaprenol N-acetylglucosamine transferase (360 aa).

UDP-N-acetyl-alpha-D-glucosamine is bound by residues Ser-198 and Gln-289.

Belongs to the glycosyltransferase 28 family. MurG subfamily.

Its subcellular location is the cell membrane. The catalysed reaction is Mur2Ac(oyl-L-Ala-gamma-D-Glu-L-Lys-D-Ala-D-Ala)-di-trans,octa-cis-undecaprenyl diphosphate + UDP-N-acetyl-alpha-D-glucosamine = beta-D-GlcNAc-(1-&gt;4)-Mur2Ac(oyl-L-Ala-gamma-D-Glu-L-Lys-D-Ala-D-Ala)-di-trans,octa-cis-undecaprenyl diphosphate + UDP + H(+). The protein operates within cell wall biogenesis; peptidoglycan biosynthesis. Its function is as follows. Cell wall formation. Catalyzes the transfer of a GlcNAc subunit on undecaprenyl-pyrophosphoryl-MurNAc-pentapeptide (lipid intermediate I) to form undecaprenyl-pyrophosphoryl-MurNAc-(pentapeptide)GlcNAc (lipid intermediate II). This is UDP-N-acetylglucosamine--N-acetylmuramyl-(pentapeptide) pyrophosphoryl-undecaprenol N-acetylglucosamine transferase from Streptococcus pyogenes serotype M6 (strain ATCC BAA-946 / MGAS10394).